The following is a 902-amino-acid chain: 4-hydroxyphenylacetate decarboxylase glycyl radical subunit (902 aa).

A PFL domain is found at 38–774 (KRAEDLLDVY…ATLATPDGRL (737 aa)). The 4-hydroxyphenylacetate site is built by S348 and C507. The active-site Cysteine radical intermediate is C507. E509 acts as the Proton donor in catalysis. The 4-hydroxyphenylacetate site is built by H540 and E641. The region spanning 782 to 902 (GSVSAYAGTD…VIARTEYEGV (121 aa)) is the Glycine radical domain. A Glycine radical modification is found at G877.

This sequence belongs to the glycyl radical enzyme (GRE) family. HPAD subfamily. As to quaternary structure, heterooctamer consisting of 4 large (HpdB) subunits and 4 small (HpdC) subunits. Also forms a catalytically inactive homodimer. Post-translationally, phosphorylated on serine. Phosphorylation may trigger the formation of the active heterooctamers and thereby regulates enzyme activity. Requires the activating protein HpdA to generate the key active site glycyl radical that is involved in catalysis.

It carries out the reaction 4-hydroxyphenylacetate + H(+) = 4-methylphenol + CO2. The catalysed reaction is 3,4-dihydroxyphenylacetate + H(+) = 4-methylcatechol + CO2. The enzyme catalyses 2-hydroxy-2-(4-hydroxyphenyl)acetate + H(+) = 4-hydroxybenzyl alcohol + CO2. With respect to regulation, enzyme activity catalyzed by the HPA decarboxylase complex is rapidly and irreversibly inactivated by oxygen. Competitively inhibited by p-hydroxyphenylacetamide. Not inhibited by m- or o-hydroxyphenyl-acetate, p-hydroxybenzoate or p-hydroxyphenylpropionate. Functionally, glycyl radical subunit of the HPA decarboxylase that decarboxylates phenylacetates with a hydroxyl group in the p-position. Active toward 4-hydroxyphenylacetate, 3,4-dihydroxyphenylacetate and to a lesser extent p-hydroxymandelate (2-hydroxy-2-(4-hydroxyphenyl)acetate), forming 4-methylphenol, 4-methylcatechol and 4-hydroxybenzylalcohol, respectively. Is likely involved in the catabolism of aromatic amino acids such as tyrosine fermentation. 4-methylphenol (p-cresol) formation provides metabolic toxicity, which may benefit the pathogen C.difficile by suppression of the endogenous gastrointestinal microflora, allowing the development of gastrointestinal infections. The large subunit is the catalytic subunit that binds the substrate. The chain is 4-hydroxyphenylacetate decarboxylase glycyl radical subunit from Clostridioides difficile (Peptoclostridium difficile).